Reading from the N-terminus, the 522-residue chain is Sugar transport protein 1 (522 aa).

The Cytoplasmic portion of the chain corresponds to 1-22 (MPAGGFVVGDGQKAYPGKLTPF). Residues 23–43 (VLFTCVVAAMGGLIFGYDIGI) traverse the membrane as a helical segment. Residues 44-79 (SGGVTSMPSFLKRFFPSVYRKQQEDASTNQYCQYDS) lie on the Extracellular side of the membrane. Residues 80–100 (PTLTMFTSSLYLAALISSLVA) traverse the membrane as a helical segment. The Cytoplasmic segment spans residues 101 to 117 (STVTRKFGRRLSMLFGG). Residues 118-138 (ILFCAGALINGFAKHVWMLIV) form a helical membrane-spanning segment. The Extracellular segment spans residues 139-140 (GR). The helical transmembrane segment at 141–161 (ILLGFGIGFANQAVPLYLSEM) threads the bilayer. The Cytoplasmic portion of the chain corresponds to 162–171 (APYKYRGALN). The helical transmembrane segment at 172–192 (IGFQLSITIGILVAEVLNYFF) threads the bilayer. The Extracellular portion of the chain corresponds to 193–202 (AKIKGGWGWR). The chain crosses the membrane as a helical span at residues 203–223 (LSLGGAVVPALIITIGSLVLP). The Cytoplasmic portion of the chain corresponds to 224–289 (DTPNSMIERG…YRPHLTMAVM (66 aa)). At S252 the chain carries Phosphoserine. Residues 290 to 310 (IPFFQQLTGINVIMFYAPVLF) traverse the membrane as a helical segment. The Extracellular portion of the chain corresponds to 311-321 (NTIGFTTDASL). A helical membrane pass occupies residues 322-342 (MSAVVTGSVNVAATLVSIYGV). Topologically, residues 343-348 (DRWGRR) are cytoplasmic. The chain crosses the membrane as a helical span at residues 349 to 369 (FLFLEGGTQMLICQAVVAACI). The Extracellular portion of the chain corresponds to 370 to 384 (GAKFGVDGTPGELPK). The chain crosses the membrane as a helical span at residues 385–405 (WYAIVVVTFICIYVAGFAWSW). Over 406–427 (GPLGWLVPSEIFPLEIRSAAQS) the chain is Cytoplasmic. The helical transmembrane segment at 428–448 (ITVSVNMIFTFIIAQIFLTML) threads the bilayer. The Extracellular portion of the chain corresponds to 449 to 452 (CHLK). A helical membrane pass occupies residues 453–473 (FGLFLVFAFFVVVMSIFVYIF). Over 474–522 (LPETKGIPIEEMGQVWRSHWYWSRFVEDGEYGNALEMGKNSNQAGTKHV) the chain is Cytoplasmic.

This sequence belongs to the major facilitator superfamily. Sugar transporter (TC 2.A.1.1) family. In terms of tissue distribution, mostly expressed in young leaves, especially in guard cells (at protein level). Also present in roots.

It is found in the cell membrane. Major hexose transporter. Mediates an active uptake of hexoses, by sugar/hydrogen symport. Can transport glucose, 3-O-methylglucose, fructose, xylose, mannose, galactose, fucose, 2-deoxyglucose and arabinose. Confers sensitivity to galactose in seedlings. This chain is Sugar transport protein 1 (STP1), found in Arabidopsis thaliana (Mouse-ear cress).